A 457-amino-acid chain; its full sequence is Hepatocyte nuclear factor 3-beta (457 aa).

A transactivation domain 1 region spans residues aspartate 14–serine 93. The Nuclear localization signal signature appears at leucine 106–leucine 113. Threonine 156 bears the Phosphothreonine mark. Positions lysine 159–glutamine 252 form a DNA-binding region, fork-head. Serine 212 and serine 283 each carry phosphoserine. The span at alanine 280–glycine 292 shows a compositional bias: low complexity. The interval alanine 280–lysine 365 is disordered. Over residues proline 298–proline 310 the composition is skewed to polar residues. The residue at position 301 (threonine 301) is a Phosphothreonine. Phosphoserine is present on residues serine 303, serine 306, serine 307, and serine 309. Over residues proline 339–proline 352 the composition is skewed to low complexity. The segment at glutamate 361–serine 457 is transactivation domain 2. Serine 436 and serine 457 each carry phosphoserine.

Binds DNA as a monomer. Binds TLE1. Interacts with FOXA1 and FOXA3. Interacts with PRKDC. Interacts with AKT1. Interacts with TET1; this interaction may recruit TET1 to specific genomic loci to mediate their demethylation. In terms of processing, phosphorylation on Thr-156 abolishes binding to target promoters and subsequent transcription activation upon insulin stimulation.

Its subcellular location is the nucleus. The protein resides in the cytoplasm. Transcription factor that is involved in embryonic development, establishment of tissue-specific gene expression and regulation of gene expression in differentiated tissues. Is thought to act as a 'pioneer' factor opening the compacted chromatin for other proteins through interactions with nucleosomal core histones and thereby replacing linker histones at target enhancer and/or promoter sites. Binds DNA with the consensus sequence 5'-[AC]A[AT]T[AG]TT[GT][AG][CT]T[CT]-3'. In embryonic development is required for notochord formation. Involved in the development of multiple endoderm-derived organ systems such as the liver, pancreas and lungs; FOXA1 and FOXA2 seem to have at least in part redundant roles. Originally described as a transcription activator for a number of liver genes such as AFP, albumin, tyrosine aminotransferase, PEPCK, etc. Interacts with the cis-acting regulatory regions of these genes. Involved in glucose homeostasis; regulates the expression of genes important for glucose sensing in pancreatic beta-cells and glucose homeostasis. Involved in regulation of fat metabolism. Binds to fibrinogen beta promoter and is involved in IL6-induced fibrinogen beta transcriptional activation. This chain is Hepatocyte nuclear factor 3-beta (FOXA2), found in Homo sapiens (Human).